A 488-amino-acid chain; its full sequence is 3-octaprenyl-4-hydroxybenzoate carboxy-lyase (488 aa).

Asparagine 172 serves as a coordination point for Mn(2+). Residues 175-177, 189-191, and 194-195 contribute to the prenylated FMN site; these read IYR, RWL, and RG. A Mn(2+)-binding site is contributed by glutamate 238. Aspartate 287 serves as the catalytic Proton donor.

This sequence belongs to the UbiD family. In terms of assembly, homohexamer. Requires prenylated FMN as cofactor. Mn(2+) is required as a cofactor.

Its subcellular location is the cell membrane. The enzyme catalyses a 4-hydroxy-3-(all-trans-polyprenyl)benzoate + H(+) = a 2-(all-trans-polyprenyl)phenol + CO2. It functions in the pathway cofactor biosynthesis; ubiquinone biosynthesis. Functionally, catalyzes the decarboxylation of 3-octaprenyl-4-hydroxy benzoate to 2-octaprenylphenol, an intermediate step in ubiquinone biosynthesis. This is 3-octaprenyl-4-hydroxybenzoate carboxy-lyase from Pseudomonas putida (strain GB-1).